Reading from the N-terminus, the 247-residue chain is 5-oxoprolinase subunit A (247 aa).

It belongs to the LamB/PxpA family. Forms a complex composed of PxpA, PxpB and PxpC.

It catalyses the reaction 5-oxo-L-proline + ATP + 2 H2O = L-glutamate + ADP + phosphate + H(+). Its function is as follows. Catalyzes the cleavage of 5-oxoproline to form L-glutamate coupled to the hydrolysis of ATP to ADP and inorganic phosphate. The chain is 5-oxoprolinase subunit A from Vibrio vulnificus (strain YJ016).